Reading from the N-terminus, the 315-residue chain is DNA-directed RNA polymerase subunit alpha (315 aa).

The alpha N-terminal domain (alpha-NTD) stretch occupies residues 1–228 (MLEIEKPIIE…EHFKLFMSLT (228 aa)). Residues 245 to 315 (KEKVLEMTVE…LGLALKLTEE (71 aa)) are alpha C-terminal domain (alpha-CTD).

This sequence belongs to the RNA polymerase alpha chain family. In terms of assembly, homodimer. The RNAP catalytic core consists of 2 alpha, 1 beta, 1 beta' and 1 omega subunit. When a sigma factor is associated with the core the holoenzyme is formed, which can initiate transcription.

It catalyses the reaction RNA(n) + a ribonucleoside 5'-triphosphate = RNA(n+1) + diphosphate. Functionally, DNA-dependent RNA polymerase catalyzes the transcription of DNA into RNA using the four ribonucleoside triphosphates as substrates. The chain is DNA-directed RNA polymerase subunit alpha from Clostridium beijerinckii (strain ATCC 51743 / NCIMB 8052) (Clostridium acetobutylicum).